The primary structure comprises 85 residues: Large ribosomal subunit protein bL27 (85 aa).

Residues 1 to 20 (MAHKKAGGSTRNGRDSEAKR) are disordered.

Belongs to the bacterial ribosomal protein bL27 family.

The chain is Large ribosomal subunit protein bL27 from Cronobacter sakazakii (strain ATCC BAA-894) (Enterobacter sakazakii).